We begin with the raw amino-acid sequence, 336 residues long: MILLEKTQEKKINDKEELIVKEEVETNWDYGCNPYERKIEDLIKYGVVVVDKPRGPTSHEVSTWVKKILNLDKAGHGGTLDPKVTGVLPVALERATKTIPMWHIPPKEYVCLMHLHRDASEEDILRVFKEFTGRIYQRPPLKAAVKRRLRIRKIHELELLDKDGKDVLFRVKCQSGTYIRKLCEDIGEALGTSAHMQELRRTKSGCFEEKDAVYLQDLLDAYVFWKEDGDEEELRRVIKPMEYGLRHLKKVVVKDSAVDAICHGADVYVRGIAKLSKGIGKGETVLVETLKGEAVAVGKALMNTKEILNADKGVAVDVERVYMDRGTYPRMWKRKK.

The active-site Nucleophile is the D81. The PUA domain occupies 248–323 (LKKVVVKDSA…VAVDVERVYM (76 aa)).

The protein belongs to the pseudouridine synthase TruB family. Type 2 subfamily.

It catalyses the reaction uridine(55) in tRNA = pseudouridine(55) in tRNA. Its function is as follows. Could be responsible for synthesis of pseudouridine from uracil-55 in the psi GC loop of transfer RNAs. This Methanocaldococcus jannaschii (strain ATCC 43067 / DSM 2661 / JAL-1 / JCM 10045 / NBRC 100440) (Methanococcus jannaschii) protein is Probable tRNA pseudouridine synthase B.